We begin with the raw amino-acid sequence, 268 residues long: Phosphatidylglycerol--prolipoprotein diacylglyceryl transferase (268 aa).

3 helical membrane passes run 16–36, 56–76, and 92–112; these read FITL…GIWL, IWLV…FNWG, and GIAI…FTYV. Position 136 (Arg-136) interacts with a 1,2-diacyl-sn-glycero-3-phospho-(1'-sn-glycerol). Transmembrane regions (helical) follow at residues 175–195, 204–224, and 236–256; these read PTFL…LWLF, GTLL…IEGL, and IAQV…FRLY.

It belongs to the Lgt family.

The protein localises to the cell inner membrane. The catalysed reaction is L-cysteinyl-[prolipoprotein] + a 1,2-diacyl-sn-glycero-3-phospho-(1'-sn-glycerol) = an S-1,2-diacyl-sn-glyceryl-L-cysteinyl-[prolipoprotein] + sn-glycerol 1-phosphate + H(+). The protein operates within protein modification; lipoprotein biosynthesis (diacylglyceryl transfer). Catalyzes the transfer of the diacylglyceryl group from phosphatidylglycerol to the sulfhydryl group of the N-terminal cysteine of a prolipoprotein, the first step in the formation of mature lipoproteins. The protein is Phosphatidylglycerol--prolipoprotein diacylglyceryl transferase of Thermosynechococcus vestitus (strain NIES-2133 / IAM M-273 / BP-1).